The primary structure comprises 181 residues: Lysozyme A (181 aa).

The N-terminal stretch at 1–19 (MRIAFFLLVLAVIIGFAYG) is a signal peptide. Positions 139-181 (LTDSRPLGPFNVTESEMAQLFIDHEIAMAQCEAEKTCNGFDLE) are excised as a propeptide.

Belongs to the dictyostelium lysozyme family. Post-translationally, contains six disulfide bonds.

It localises to the cytoplasmic vesicle lumen. It catalyses the reaction Hydrolysis of 1,4-beta-linkages between N-acetylmuramic acid and N-acetyl-D-glucosamine residues in a peptidoglycan.. In terms of biological role, has antibacterial activity against the Gram-positive bacteria B.subtilis, B.megaterium and M.luteus. No antibacterial activity detected against the Gram-positive bacterium S.aureus or against the Gram-negative bacterium E.coli. Lacks chitinase activity. This is Lysozyme A from Dictyostelium discoideum (Social amoeba).